A 92-amino-acid polypeptide reads, in one-letter code: MTRSIWKGPFIDGYLLKKVDKVREGGRNEVIKMWSRRSTILPQFVGFTFGVYNGQKHVPVSVNEDMVGHKFGEFAPTRTYYGHGADKKAKRK.

It belongs to the universal ribosomal protein uS19 family.

Its function is as follows. Protein S19 forms a complex with S13 that binds strongly to the 16S ribosomal RNA. The chain is Small ribosomal subunit protein uS19 from Mesorhizobium japonicum (strain LMG 29417 / CECT 9101 / MAFF 303099) (Mesorhizobium loti (strain MAFF 303099)).